Consider the following 142-residue polypeptide: MAKKVQAYVKLQVAAGMANPSPPVGPALGQQGVNIMEFCKAFNARTESLEKGLPIPVVITVYADRSFTFVTKTPPAAVLLKKALGLKSGSSKPNKDKVGTVTQAQLRQIAETKAADMTGATIETKMKSIAGTARSMGLIVEE.

This sequence belongs to the universal ribosomal protein uL11 family. In terms of assembly, part of the ribosomal stalk of the 50S ribosomal subunit. Interacts with L10 and the large rRNA to form the base of the stalk. L10 forms an elongated spine to which L12 dimers bind in a sequential fashion forming a multimeric L10(L12)X complex. In terms of processing, one or more lysine residues are methylated.

In terms of biological role, forms part of the ribosomal stalk which helps the ribosome interact with GTP-bound translation factors. In Glaesserella parasuis serovar 5 (strain SH0165) (Haemophilus parasuis), this protein is Large ribosomal subunit protein uL11.